The sequence spans 406 residues: Cysteine desulfurase (406 aa).

The residue at position 226 (Lys-226) is an N6-(pyridoxal phosphate)lysine. The Cysteine persulfide intermediate role is filled by Cys-364.

This sequence belongs to the class-V pyridoxal-phosphate-dependent aminotransferase family. Csd subfamily. As to quaternary structure, homodimer. Interacts with SufE and the SufBCD complex composed of SufB, SufC and SufD. The interaction with SufE is required to mediate the direct transfer of the sulfur atom from the S-sulfanylcysteine. Pyridoxal 5'-phosphate serves as cofactor.

It is found in the cytoplasm. The catalysed reaction is (sulfur carrier)-H + L-cysteine = (sulfur carrier)-SH + L-alanine. It carries out the reaction L-selenocysteine + AH2 = hydrogenselenide + L-alanine + A + H(+). It functions in the pathway cofactor biosynthesis; iron-sulfur cluster biosynthesis. Functionally, cysteine desulfurases mobilize the sulfur from L-cysteine to yield L-alanine, an essential step in sulfur metabolism for biosynthesis of a variety of sulfur-containing biomolecules. Component of the suf operon, which is activated and required under specific conditions such as oxidative stress and iron limitation. Acts as a potent selenocysteine lyase in vitro, that mobilizes selenium from L-selenocysteine. Selenocysteine lyase activity is however unsure in vivo. In Serratia proteamaculans (strain 568), this protein is Cysteine desulfurase.